A 502-amino-acid chain; its full sequence is Transmembrane prolyl 4-hydroxylase (502 aa).

The tract at residues 1–29 is disordered; it reads MAAAAVTGQRPETAAAEEASRPQWAPPDH. At 1 to 60 the chain is on the cytoplasmic side; it reads MAAAAVTGQRPETAAAEEASRPQWAPPDHCQAQAAAGLGDGEDAPVRPLCKPRGICSRAY. A helical; Signal-anchor for type II membrane protein membrane pass occupies residues 61 to 81; the sequence is FLVLMVFVHLYLGNVLALLLF. Over 82 to 502 the chain is Lumenal; it reads VHYSNGDESS…RAYRDARVEL (421 aa). Residues 89-111 form a disordered region; sequence ESSDPGPQHRAQGPGPEPTLGPL. 2 EF-hand domains span residues 185–220 and 224–259; these read TMQVSQLDLFRLLDQNRDGHLQLREVLAQTRLGNGW and PESIQEMYAAIKADPDGDGVLSLQEFSNMDLRDFHK. Aspartate 198, asparagine 200, aspartate 202, histidine 204, glutamate 209, aspartate 237, aspartate 239, aspartate 241, and glutamate 248 together coordinate Ca(2+). Positions 310-460 constitute a Fe2OG dioxygenase domain; it reads LSEPLQVVRY…KWIANNWINV (151 aa). Fe cation contacts are provided by histidine 328 and aspartate 330. Asparagine 348 and asparagine 368 each carry an N-linked (GlcNAc...) asparagine glycan. A Fe cation-binding site is contributed by glutamate 374. N-linked (GlcNAc...) asparagine glycosylation is present at asparagine 382. Residue lysine 451 participates in 2-oxoglutarate binding.

In terms of assembly, homodimer. It depends on Fe(2+) as a cofactor. Requires L-ascorbate as cofactor. In terms of processing, glycosylated. In terms of tissue distribution, widely expressed with highest levels in adult pancreas, heart, skeletal muscle, brain, placenta, kidney and adrenal gland. Expressed at lower levels in epiphyseal cartilage and in fibroblasts.

It localises to the endoplasmic reticulum membrane. The enzyme catalyses L-prolyl-[hypoxia-inducible factor alpha subunit] + 2-oxoglutarate + O2 = trans-4-hydroxy-L-prolyl-[hypoxia-inducible factor alpha subunit] + succinate + CO2. Catalyzes the post-translational formation of 4-hydroxyproline in hypoxia-inducible factor (HIF) alpha proteins. Hydroxylates HIF1A at 'Pro-402' and 'Pro-564'. May function as a cellular oxygen sensor and, under normoxic conditions, may target HIF through the hydroxylation for proteasomal degradation via the von Hippel-Lindau ubiquitination complex. The protein is Transmembrane prolyl 4-hydroxylase (P4HTM) of Homo sapiens (Human).